We begin with the raw amino-acid sequence, 353 residues long: Probable dual-specificity RNA methyltransferase RlmN (353 aa).

The active-site Proton acceptor is Glu-104. Residues 112-341 (DGGRKTICIS…ILNRRSPGKD (230 aa)) enclose the Radical SAM core domain. A disulfide bond links Cys-119 and Cys-346. [4Fe-4S] cluster-binding residues include Cys-126, Cys-130, and Cys-133. Residues 173–174 (GE), Ser-205, 228–230 (SLN), and Asn-304 each bind S-adenosyl-L-methionine. Residue Cys-346 is the S-methylcysteine intermediate of the active site.

Belongs to the radical SAM superfamily. RlmN family. The cofactor is [4Fe-4S] cluster.

It localises to the cytoplasm. The catalysed reaction is adenosine(2503) in 23S rRNA + 2 reduced [2Fe-2S]-[ferredoxin] + 2 S-adenosyl-L-methionine = 2-methyladenosine(2503) in 23S rRNA + 5'-deoxyadenosine + L-methionine + 2 oxidized [2Fe-2S]-[ferredoxin] + S-adenosyl-L-homocysteine. It carries out the reaction adenosine(37) in tRNA + 2 reduced [2Fe-2S]-[ferredoxin] + 2 S-adenosyl-L-methionine = 2-methyladenosine(37) in tRNA + 5'-deoxyadenosine + L-methionine + 2 oxidized [2Fe-2S]-[ferredoxin] + S-adenosyl-L-homocysteine. Functionally, specifically methylates position 2 of adenine 2503 in 23S rRNA and position 2 of adenine 37 in tRNAs. This chain is Probable dual-specificity RNA methyltransferase RlmN, found in Leptospira interrogans serogroup Icterohaemorrhagiae serovar Lai (strain 56601).